The following is a 107-amino-acid chain: MTKSELVAQLALRFPQLVLKDADFAVKTMLDAMSDALSKGHRIEIRGFGSFGLNRRPARVGRNPKSGEKVQVPEKFVPHFKPGKELRERVDGRAGEPLKADDPDDER.

The interval 56–107 (RPARVGRNPKSGEKVQVPEKFVPHFKPGKELRERVDGRAGEPLKADDPDDER) is disordered. Basic and acidic residues predominate over residues 82 to 101 (PGKELRERVDGRAGEPLKAD).

It belongs to the bacterial histone-like protein family. As to quaternary structure, heterodimer of an alpha and a beta chain.

Its function is as follows. This protein is one of the two subunits of integration host factor, a specific DNA-binding protein that functions in genetic recombination as well as in transcriptional and translational control. In Burkholderia vietnamiensis (strain G4 / LMG 22486) (Burkholderia cepacia (strain R1808)), this protein is Integration host factor subunit beta.